A 220-amino-acid polypeptide reads, in one-letter code: Protein-L-isoaspartate O-methyltransferase (220 aa).

Ser-68 is an active-site residue.

It belongs to the methyltransferase superfamily. L-isoaspartyl/D-aspartyl protein methyltransferase family.

It is found in the cytoplasm. It carries out the reaction [protein]-L-isoaspartate + S-adenosyl-L-methionine = [protein]-L-isoaspartate alpha-methyl ester + S-adenosyl-L-homocysteine. Catalyzes the methyl esterification of L-isoaspartyl residues in peptides and proteins that result from spontaneous decomposition of normal L-aspartyl and L-asparaginyl residues. It plays a role in the repair and/or degradation of damaged proteins. The protein is Protein-L-isoaspartate O-methyltransferase of Dictyoglomus turgidum (strain DSM 6724 / Z-1310).